Consider the following 249-residue polypeptide: Triosephosphate isomerase (249 aa).

Substrate is bound at residue 9 to 11 (NWK). His-94 (electrophile) is an active-site residue. Glu-166 (proton acceptor) is an active-site residue. Substrate contacts are provided by residues Gly-172 and 232–233 (GG).

Belongs to the triosephosphate isomerase family. Homodimer.

Its subcellular location is the cytoplasm. The enzyme catalyses D-glyceraldehyde 3-phosphate = dihydroxyacetone phosphate. It participates in carbohydrate biosynthesis; gluconeogenesis. Its pathway is carbohydrate degradation; glycolysis; D-glyceraldehyde 3-phosphate from glycerone phosphate: step 1/1. Involved in the gluconeogenesis. Catalyzes stereospecifically the conversion of dihydroxyacetone phosphate (DHAP) to D-glyceraldehyde-3-phosphate (G3P). This chain is Triosephosphate isomerase, found in Xylella fastidiosa (strain M23).